The following is a 639-amino-acid chain: Chaperone protein HtpG (639 aa).

The tract at residues 1-343 (MEATATKEHL…SNDLPLNVSR (343 aa)) is a; substrate-binding. The tract at residues 344–564 (EILQESKDIE…THDMSGNLER (221 aa)) is b. Residues 565-639 (LLKSAGQKVT…QLFLSTGSKE (75 aa)) form a c region.

The protein belongs to the heat shock protein 90 family. Homodimer.

It localises to the cytoplasm. Its function is as follows. Molecular chaperone. Has ATPase activity. This is Chaperone protein HtpG from Nitrosospira multiformis (strain ATCC 25196 / NCIMB 11849 / C 71).